Reading from the N-terminus, the 231-residue chain is Cytochrome c oxidase assembly factor 7A (231 aa).

5 Sel1-like repeats span residues 34–66 (PDGC…DQNE), 68–104 (SESF…NKGG), 108–145 (IDSC…DGNF), 146–182 (AASC…SLGH), and 183–218 (VWGC…DLHK).

This sequence belongs to the hcp beta-lactamase family.

The protein resides in the mitochondrion intermembrane space. Its function is as follows. May be required for assembly of mitochondrial respiratory chain complexes. This is Cytochrome c oxidase assembly factor 7A (coa7-a) from Xenopus laevis (African clawed frog).